A 1082-amino-acid polypeptide reads, in one-letter code: CRISPR-associated endonuclease Cas9 (1082 aa).

The active-site For RuvC-like nuclease domain is the Asp16. Residues Asp16, Glu504, and Glu508 each coordinate Mg(2+). The HNH Cas9-type domain maps to 512–667 (SFKDRKEIEK…DEDGFKERNL (156 aa)). Residue His588 is the Proton acceptor for HNH nuclease domain of the active site. His723 lines the Mg(2+) pocket.

It belongs to the CRISPR-associated protein Cas9 family. Subtype II-C subfamily. As to quaternary structure, monomer. Binds crRNA and tracrRNA. The cofactor is Mg(2+).

Functionally, CRISPR (clustered regularly interspaced short palindromic repeat) is an adaptive immune system that provides protection against mobile genetic elements (viruses, transposable elements and conjugative plasmids). CRISPR clusters contain spacers, sequences complementary to antecedent mobile elements, and target invading nucleic acids. CRISPR clusters are transcribed and processed into CRISPR RNA (crRNA). In type II CRISPR systems correct processing of pre-crRNA requires a trans-encoded small RNA (tracrRNA), endogenous ribonuclease 3 (rnc) and this protein. The tracrRNA serves as a guide for ribonuclease 3-aided processing of pre-crRNA. Subsequently Cas9/crRNA/tracrRNA endonucleolytically cleaves linear or circular dsDNA target complementary to the spacer; Cas9 is inactive in the absence of the 2 guide RNAs (gRNA). Cas9 recognizes the protospacer adjacent motif (PAM) in the CRISPR repeat sequences to help distinguish self versus nonself, as targets within the bacterial CRISPR locus do not have PAMs. PAM recognition is also required for catalytic activity. Cuts target DNA in Cas9:gRNAs mixing experiments with C.jejuni strain NCTC 11168 and P.multocoda strain Pm70. The protein is CRISPR-associated endonuclease Cas9 of Neisseria meningitidis serogroup A / serotype 4A (strain DSM 15465 / Z2491).